Reading from the N-terminus, the 315-residue chain is Lipoyl synthase (315 aa).

[4Fe-4S] cluster is bound by residues cysteine 62, cysteine 67, cysteine 73, cysteine 88, cysteine 92, cysteine 95, and serine 302. The Radical SAM core domain maps to 74-291 (FNHGAATFMI…KKIALKLGFS (218 aa)).

It belongs to the radical SAM superfamily. Lipoyl synthase family. The cofactor is [4Fe-4S] cluster.

The protein resides in the cytoplasm. It carries out the reaction [[Fe-S] cluster scaffold protein carrying a second [4Fe-4S](2+) cluster] + N(6)-octanoyl-L-lysyl-[protein] + 2 oxidized [2Fe-2S]-[ferredoxin] + 2 S-adenosyl-L-methionine + 4 H(+) = [[Fe-S] cluster scaffold protein] + N(6)-[(R)-dihydrolipoyl]-L-lysyl-[protein] + 4 Fe(3+) + 2 hydrogen sulfide + 2 5'-deoxyadenosine + 2 L-methionine + 2 reduced [2Fe-2S]-[ferredoxin]. The protein operates within protein modification; protein lipoylation via endogenous pathway; protein N(6)-(lipoyl)lysine from octanoyl-[acyl-carrier-protein]: step 2/2. In terms of biological role, catalyzes the radical-mediated insertion of two sulfur atoms into the C-6 and C-8 positions of the octanoyl moiety bound to the lipoyl domains of lipoate-dependent enzymes, thereby converting the octanoylated domains into lipoylated derivatives. The sequence is that of Lipoyl synthase from Ruthia magnifica subsp. Calyptogena magnifica.